The chain runs to 2211 residues: Activating signal cointegrator 1 complex subunit 3 (2211 aa).

The Helicase ATP-binding 1 domain maps to 495-678; the sequence is ETAYNTNENM…FLHVNPYIGL (184 aa). 508 to 515 is an ATP binding site; sequence APTGAGKT. Residues 620–623 carry the DEVH box motif; sequence DEVH. Positions 717–923 constitute a Helicase C-terminal 1 domain; that stretch reads VLKQIMAGHQ…GTVTNVEEAV (207 aa). Residues 987-1296 enclose the SEC63 1 domain; that stretch reads STDLGRTASH…GAEAVCIINF (310 aa). The 176-residue stretch at 1345–1520 folds into the Helicase ATP-binding 2 domain; sequence HTLYHTDCNV…WLNINQMGLF (176 aa). 1358–1365 provides a ligand contact to ATP; it reads APTGSGKT. The short motif at 1462-1465 is the DEIH box element; the sequence is DEIH. Positions 1553 to 1760 constitute a Helicase C-terminal 2 domain; that stretch reads PAFQAIRSHS…GTITSKQDAM (208 aa). Residues 1821–2184 enclose the SEC63 2 domain; it reads PLTYGRIASY…YLGMDQQYDI (364 aa).

The protein belongs to the helicase family.

Its subcellular location is the nucleus. It localises to the nucleus speckle. The protein localises to the cytoplasm. It is found in the cytosol. It carries out the reaction Couples ATP hydrolysis with the unwinding of duplex DNA by translocating in the 3'-5' direction.. It catalyses the reaction ATP + H2O = ADP + phosphate + H(+). 3'-5' DNA helicase involved in repair of alkylated DNA. Promotes DNA unwinding to generate single-stranded substrate needed for ALKBH3, enabling ALKBH3 to process alkylated N3-methylcytosine (3mC) within double-stranded regions. Also involved in activation of the ribosome quality control (RQC) pathway, a pathway that degrades nascent peptide chains during problematic translation. Drives the splitting of stalled ribosomes. This Gallus gallus (Chicken) protein is Activating signal cointegrator 1 complex subunit 3 (ascc3).